We begin with the raw amino-acid sequence, 238 residues long: uncharacterized protein (238 aa).

A run of 7 helical transmembrane segments spans residues 19–39, 64–84, 85–105, 112–132, 141–161, 176–196, and 218–238; these read FIYG…LLGW, WSVI…IYNW, QVLY…YFTK, LWND…SYYF, ILWV…YVKS, VIFH…ILAL, and VGLI…VATL.

This sequence to B.subtilis YwiC.

The protein resides in the cell membrane. This is an uncharacterized protein from Haemophilus influenzae (strain ATCC 51907 / DSM 11121 / KW20 / Rd).